The sequence spans 190 residues: MKLVFATHNPNKFREIKSLVPKHIELLSLSDINCNEDIEETGDTIDENAMIKADYVRNHYGYDCFADDTGLEVHSLAGAPGVYSARYAGDEKNDEANIEKLLEQLKKRDDRTARFKTVIALNLKGNQNLFTGICEGEILEEKTGTKGFGYDPIFLPNGFESSFAEMELTEKSKISHRGIAFRELMEYLSK.

Substrate is bound at residue 7 to 12; it reads THNPNK. Glu39 and Asp68 together coordinate Mg(2+). Asp68 serves as the catalytic Proton acceptor. Residues Thr69, 148–151, Lys171, and 176–177 contribute to the substrate site; these read FGYD and HR.

The protein belongs to the HAM1 NTPase family. In terms of assembly, homodimer. Requires Mg(2+) as cofactor.

It carries out the reaction XTP + H2O = XMP + diphosphate + H(+). The enzyme catalyses dITP + H2O = dIMP + diphosphate + H(+). The catalysed reaction is ITP + H2O = IMP + diphosphate + H(+). In terms of biological role, pyrophosphatase that catalyzes the hydrolysis of nucleoside triphosphates to their monophosphate derivatives, with a high preference for the non-canonical purine nucleotides XTP (xanthosine triphosphate), dITP (deoxyinosine triphosphate) and ITP. Seems to function as a house-cleaning enzyme that removes non-canonical purine nucleotides from the nucleotide pool, thus preventing their incorporation into DNA/RNA and avoiding chromosomal lesions. The protein is dITP/XTP pyrophosphatase of Christiangramia forsetii (strain DSM 17595 / CGMCC 1.15422 / KT0803) (Gramella forsetii).